Here is a 394-residue protein sequence, read N- to C-terminus: Phosphoglycerate kinase (394 aa).

Residues 21 to 23 (DFN), arginine 36, 59 to 62 (HLGR), arginine 118, and arginine 151 contribute to the substrate site. The residue at position 183 (serine 183) is a Phosphoserine. Lysine 201 contributes to the ATP binding site. Threonine 299 bears the Phosphothreonine mark. Residues glutamate 323 and 350 to 353 (GGDS) contribute to the ATP site.

The protein belongs to the phosphoglycerate kinase family. Monomer.

The protein localises to the cytoplasm. The catalysed reaction is (2R)-3-phosphoglycerate + ATP = (2R)-3-phospho-glyceroyl phosphate + ADP. The protein operates within carbohydrate degradation; glycolysis; pyruvate from D-glyceraldehyde 3-phosphate: step 2/5. This chain is Phosphoglycerate kinase, found in Geobacillus sp. (strain WCH70).